Consider the following 199-residue polypeptide: Inner membrane protein E199L (199 aa).

Residue Asn131 is glycosylated (N-linked (GlcNAc...) asparagine; by host). A helical membrane pass occupies residues 150 to 170 (INVMNHPFLTLILIILILIII).

The protein belongs to the asfivirus E199L family. As to quaternary structure, interacts with host PYCR2; this interaction results in autophagy activation. In terms of processing, contains intramolecular disulfide bonds.

The protein localises to the virion membrane. Its subcellular location is the host membrane. Essential for viral fusion with host endosomal membrane and core release. Not required for virus morphogenesis and egress. Induces complete autophagy through the interaction with and down-regulation of host PYCR2. This African swine fever virus (isolate Tick/South Africa/Pretoriuskop Pr4/1996) (ASFV) protein is Inner membrane protein E199L.